Reading from the N-terminus, the 124-residue chain is MSSGKVKAGELWNKSKDDLTKQLAELKTELGQLRIQKVASSGSKLNRIHDIRKSIARVLTVINAKQRAQLRLFYKNKKYAPLDLRAKQTRAIRRRLSPDEKSRVLEKTKKRTVHFPQRKFAIKA.

It belongs to the universal ribosomal protein uL29 family.

In Triticum aestivum (Wheat), this protein is Large ribosomal subunit protein uL29 (RPL35).